Here is a 20-residue protein sequence, read N- to C-terminus: Phylloseptin-O1 (20 aa).

Residue G20 is modified to Glycine amide.

As to expression, expressed by the skin glands.

It localises to the secreted. Has antiprotozoal activity against T.cruzi. The protein is Phylloseptin-O1 (psn4) of Pithecopus oreades (Orange-legged leaf frog).